The chain runs to 710 residues: Polyribonucleotide nucleotidyltransferase (710 aa).

Mg(2+) is bound by residues D489 and D495. The KH domain occupies 556–615 (PKIDTIKIDVDKIKVVIGKGGETIDKIIAETGVKIDIDDEGNVSIYSSDQAAIDRTKEII). Residues 625-693 (GEVYHAKVIR…EKGRVDASMK (69 aa)) enclose the S1 motif domain. Residues 691-710 (SMKALIPRPPKPEKKEEKHD) are disordered. The span at 700–710 (PKPEKKEEKHD) shows a compositional bias: basic and acidic residues.

It belongs to the polyribonucleotide nucleotidyltransferase family. Mg(2+) serves as cofactor.

Its subcellular location is the cytoplasm. It carries out the reaction RNA(n+1) + phosphate = RNA(n) + a ribonucleoside 5'-diphosphate. In terms of biological role, involved in mRNA degradation. Catalyzes the phosphorolysis of single-stranded polyribonucleotides processively in the 3'- to 5'-direction. The sequence is that of Polyribonucleotide nucleotidyltransferase from Streptococcus pyogenes serotype M18 (strain MGAS8232).